The following is a 248-amino-acid chain: Pyridoxine 5'-phosphate synthase (248 aa).

Residue N12 coordinates 3-amino-2-oxopropyl phosphate. Position 14–15 (14–15 (DH)) interacts with 1-deoxy-D-xylulose 5-phosphate. R23 is a binding site for 3-amino-2-oxopropyl phosphate. H48 functions as the Proton acceptor in the catalytic mechanism. 2 residues coordinate 1-deoxy-D-xylulose 5-phosphate: R50 and H55. E75 (proton acceptor) is an active-site residue. Position 105 (T105) interacts with 1-deoxy-D-xylulose 5-phosphate. Catalysis depends on H196, which acts as the Proton donor. 3-amino-2-oxopropyl phosphate-binding positions include G197 and 218–219 (GH).

It belongs to the PNP synthase family. In terms of assembly, homooctamer; tetramer of dimers.

It localises to the cytoplasm. It carries out the reaction 3-amino-2-oxopropyl phosphate + 1-deoxy-D-xylulose 5-phosphate = pyridoxine 5'-phosphate + phosphate + 2 H2O + H(+). Its pathway is cofactor biosynthesis; pyridoxine 5'-phosphate biosynthesis; pyridoxine 5'-phosphate from D-erythrose 4-phosphate: step 5/5. In terms of biological role, catalyzes the complicated ring closure reaction between the two acyclic compounds 1-deoxy-D-xylulose-5-phosphate (DXP) and 3-amino-2-oxopropyl phosphate (1-amino-acetone-3-phosphate or AAP) to form pyridoxine 5'-phosphate (PNP) and inorganic phosphate. This chain is Pyridoxine 5'-phosphate synthase, found in Ectopseudomonas mendocina (strain ymp) (Pseudomonas mendocina).